Here is a 259-residue protein sequence, read N- to C-terminus: Ribonuclease HII (259 aa).

The region spanning 70 to 258 (TLIAGIDEVG…VKSLVLGKKE (189 aa)) is the RNase H type-2 domain. Aspartate 76, glutamate 77, and aspartate 168 together coordinate a divalent metal cation.

The protein belongs to the RNase HII family. Mn(2+) is required as a cofactor. Requires Mg(2+) as cofactor.

The protein localises to the cytoplasm. The enzyme catalyses Endonucleolytic cleavage to 5'-phosphomonoester.. Its function is as follows. Endonuclease that specifically degrades the RNA of RNA-DNA hybrids. The protein is Ribonuclease HII of Streptococcus pneumoniae (strain P1031).